The chain runs to 293 residues: Homoserine kinase (293 aa).

84 to 94 (PLSRGLGSSSA) contributes to the ATP binding site.

This sequence belongs to the GHMP kinase family. Homoserine kinase subfamily.

It is found in the cytoplasm. The catalysed reaction is L-homoserine + ATP = O-phospho-L-homoserine + ADP + H(+). Its pathway is amino-acid biosynthesis; L-threonine biosynthesis; L-threonine from L-aspartate: step 4/5. Catalyzes the ATP-dependent phosphorylation of L-homoserine to L-homoserine phosphate. This Nautilia profundicola (strain ATCC BAA-1463 / DSM 18972 / AmH) protein is Homoserine kinase.